Reading from the N-terminus, the 203-residue chain is Outer-membrane lipoprotein LolB (203 aa).

An N-terminal signal peptide occupies residues 1–18; sequence MTLRSFLIFFLSSLILAG. The N-palmitoyl cysteine moiety is linked to residue C19. C19 carries S-diacylglycerol cysteine lipidation.

This sequence belongs to the LolB family. Monomer.

Its subcellular location is the cell outer membrane. Plays a critical role in the incorporation of lipoproteins in the outer membrane after they are released by the LolA protein. This is Outer-membrane lipoprotein LolB from Vibrio parahaemolyticus serotype O3:K6 (strain RIMD 2210633).